A 344-amino-acid polypeptide reads, in one-letter code: Heat-inducible transcription repressor HrcA (344 aa).

Belongs to the HrcA family.

Negative regulator of class I heat shock genes (grpE-dnaK-dnaJ and groELS operons). Prevents heat-shock induction of these operons. The sequence is that of Heat-inducible transcription repressor HrcA from Streptococcus pneumoniae serotype 19F (strain G54).